Here is a 2291-residue protein sequence, read N- to C-terminus: Protein Ycf2 A (2291 aa).

1642-1649 lines the ATP pocket; the sequence is GSIGTGRS.

It belongs to the Ycf2 family.

The protein localises to the plastid. It is found in the chloroplast stroma. In terms of biological role, probable ATPase of unknown function. Its presence in a non-photosynthetic plant (Epifagus virginiana) and experiments in tobacco indicate that it has an essential function which is probably not related to photosynthesis. The chain is Protein Ycf2 A (ycf2-A) from Atropa belladonna (Belladonna).